Here is a 598-residue protein sequence, read N- to C-terminus: UvrABC system protein C (598 aa).

The region spanning 14 to 91 (DSPGCYLHKD…IQKNMPKYNI (78 aa)) is the GIY-YIG domain. Residues 196–231 (DKIIEDLRSKMLAASEEMAFERAAEYRDLISGIATM) form the UVR domain.

It belongs to the UvrC family. In terms of assembly, interacts with UvrB in an incision complex.

The protein localises to the cytoplasm. In terms of biological role, the UvrABC repair system catalyzes the recognition and processing of DNA lesions. UvrC both incises the 5' and 3' sides of the lesion. The N-terminal half is responsible for the 3' incision and the C-terminal half is responsible for the 5' incision. This Streptococcus pyogenes serotype M18 (strain MGAS8232) protein is UvrABC system protein C.